The chain runs to 438 residues: Serine hydroxymethyltransferase (438 aa).

Residues L133 and G137–L139 contribute to the (6S)-5,6,7,8-tetrahydrofolate site. K242 is modified (N6-(pyridoxal phosphate)lysine).

It belongs to the SHMT family. Homodimer. Pyridoxal 5'-phosphate is required as a cofactor.

It is found in the cytoplasm. It catalyses the reaction (6R)-5,10-methylene-5,6,7,8-tetrahydrofolate + glycine + H2O = (6S)-5,6,7,8-tetrahydrofolate + L-serine. It functions in the pathway one-carbon metabolism; tetrahydrofolate interconversion. Its pathway is amino-acid biosynthesis; glycine biosynthesis; glycine from L-serine: step 1/1. Functionally, catalyzes the reversible interconversion of serine and glycine with tetrahydrofolate (THF) serving as the one-carbon carrier. This reaction serves as the major source of one-carbon groups required for the biosynthesis of purines, thymidylate, methionine, and other important biomolecules. Also exhibits THF-independent aldolase activity toward beta-hydroxyamino acids, producing glycine and aldehydes, via a retro-aldol mechanism. The protein is Serine hydroxymethyltransferase of Brucella ovis (strain ATCC 25840 / 63/290 / NCTC 10512).